The primary structure comprises 602 residues: Elongation factor 4 (602 aa).

Positions 8 to 190 (DLIRNFSIVA…AIVHRLPPPK (183 aa)) constitute a tr-type G domain. Residues 20-25 (DHGKST) and 137-140 (NKID) contribute to the GTP site.

Belongs to the TRAFAC class translation factor GTPase superfamily. Classic translation factor GTPase family. LepA subfamily.

Its subcellular location is the cell inner membrane. It carries out the reaction GTP + H2O = GDP + phosphate + H(+). In terms of biological role, required for accurate and efficient protein synthesis under certain stress conditions. May act as a fidelity factor of the translation reaction, by catalyzing a one-codon backward translocation of tRNAs on improperly translocated ribosomes. Back-translocation proceeds from a post-translocation (POST) complex to a pre-translocation (PRE) complex, thus giving elongation factor G a second chance to translocate the tRNAs correctly. Binds to ribosomes in a GTP-dependent manner. This Cereibacter sphaeroides (strain ATCC 17029 / ATH 2.4.9) (Rhodobacter sphaeroides) protein is Elongation factor 4.